Consider the following 158-residue polypeptide: MATEKTYPMTQEGKQKLENELEDLKTVKRKEVVERIKIARSFGDLSENSEYDAAKDEQAFVEGRITQLENMIRNAVIITDNGEESTVVTLGKTVTFKELPDGDEEAYTIVGSAEADPFEGRISNDSPIAKSLLGKQIGEKVAIQTPGGEMQVEIISVK.

Residues 4-75 (EKTYPMTQEG…TQLENMIRNA (72 aa)) are a coiled coil.

This sequence belongs to the GreA/GreB family.

In terms of biological role, necessary for efficient RNA polymerase transcription elongation past template-encoded arresting sites. The arresting sites in DNA have the property of trapping a certain fraction of elongating RNA polymerases that pass through, resulting in locked ternary complexes. Cleavage of the nascent transcript by cleavage factors such as GreA or GreB allows the resumption of elongation from the new 3'terminus. GreA releases sequences of 2 to 3 nucleotides. This is Transcription elongation factor GreA from Bacillus cereus (strain ATCC 10987 / NRS 248).